Here is a 307-residue protein sequence, read N- to C-terminus: N-acetylmuramic acid 6-phosphate etherase (307 aa).

The 164-residue stretch at 57 to 220 folds into the SIS domain; the sequence is IIEAFKTNGR…TTASMIGVGK (164 aa). The active-site Proton donor is the Glu85. The active site involves Glu116.

It belongs to the GCKR-like family. MurNAc-6-P etherase subfamily. As to quaternary structure, homodimer.

The enzyme catalyses N-acetyl-D-muramate 6-phosphate + H2O = N-acetyl-D-glucosamine 6-phosphate + (R)-lactate. It functions in the pathway amino-sugar metabolism; N-acetylmuramate degradation. Specifically catalyzes the cleavage of the D-lactyl ether substituent of MurNAc 6-phosphate, producing GlcNAc 6-phosphate and D-lactate. The polypeptide is N-acetylmuramic acid 6-phosphate etherase (Alkaliphilus metalliredigens (strain QYMF)).